The chain runs to 143 residues: Fluoride-specific ion channel FluC (143 aa).

4 helical membrane-spanning segments follow: residues 6-26 (CILV…VSVL), 38-58 (TILI…LTLA), 70-90 (LFVM…SLQT), and 103-123 (MVNV…GHVV). The Na(+) site is built by G78 and T81.

This sequence belongs to the fluoride channel Fluc/FEX (TC 1.A.43) family.

Its subcellular location is the cell inner membrane. It catalyses the reaction fluoride(in) = fluoride(out). Na(+) is not transported, but it plays an essential structural role and its presence is essential for fluoride channel function. Functionally, fluoride-specific ion channel. Important for reducing fluoride concentration in the cell, thus reducing its toxicity. The chain is Fluoride-specific ion channel FluC from Methylobacterium radiotolerans (strain ATCC 27329 / DSM 1819 / JCM 2831 / NBRC 15690 / NCIMB 10815 / 0-1).